The following is a 473-amino-acid chain: Azaphilone pigments biosynthesis cluster protein L (473 aa).

An N-terminal signal peptide occupies residues 1-23 (MAELSIASGIVGLLSLGIQVTQS). ANK repeat units lie at residues 403-432 (EYGN…DVNA) and 436-465 (RYGN…NVST). N-linked (GlcNAc...) asparagine glycosylation occurs at Asn-462.

Part of the gene cluster that mediates the biosynthesis of azaphilone pigments (MonAzPs), a complex mixture of compounds with a common azaphilone skeleton very widely used as food colorants. Seems not to play a direct role in the biosynthesis but might have a regulatorx function. This Monascus ruber (Mold) protein is Azaphilone pigments biosynthesis cluster protein L.